Reading from the N-terminus, the 305-residue chain is Serine/threonine-protein kinase 16 (305 aa).

Residue Gly2 is the site of N-myristoyl glycine attachment. Residues Cys6 and Cys8 are each lipidated (S-palmitoyl cysteine). Positions 20 to 293 (YLFVQKLGEG…PVLLSQLEAL (274 aa)) constitute a Protein kinase domain. ATP contacts are provided by residues 26 to 34 (LGEGGFSYV) and Lys49. The active-site Proton acceptor is the Asp148. Residues 166–202 (DLGSMNQACIQVEGSRQALALQDWAAQRCTISYRAPE) form an activation loop region. Position 197 is a phosphoserine; by autocatalysis (Ser197). Tyr198 is modified (phosphotyrosine; by autocatalysis).

This sequence belongs to the protein kinase superfamily. Ser/Thr protein kinase family. As to quaternary structure, monomer. Interacts with DRG1 (via its N-terminal); the interaction phosphorylates DRG1. In terms of processing, mainly autophosphorylated on serine/threonine residues. Also autophosphorylated on Tyr-198. As to expression, ubiquitously expressed at low levels. Relatively higher levels in testis, kidney and liver.

Its subcellular location is the cytoplasm. It localises to the perinuclear region. It is found in the membrane. The enzyme catalyses L-seryl-[protein] + ATP = O-phospho-L-seryl-[protein] + ADP + H(+). It carries out the reaction L-threonyl-[protein] + ATP = O-phospho-L-threonyl-[protein] + ADP + H(+). The catalysed reaction is L-tyrosyl-[protein] + ATP = O-phospho-L-tyrosyl-[protein] + ADP + H(+). Membrane-associated protein kinase that phosphorylates on serine and threonine residues. In vitro substrates include DRG1, ENO1 and EIF4EBP1. Also autophosphorylates. May be involved in secretory vesicle trafficking or intracellular signaling. May have a role in regulating stromal-epithelial interactions that occur during ductal morphogenesis in the mammary gland. May be involved in TGF-beta signaling. Able to autophosphorylate on Tyr residue; it is however unclear whether it has tyrosine-protein kinase toward other proteins. This chain is Serine/threonine-protein kinase 16 (Stk16), found in Mus musculus (Mouse).